We begin with the raw amino-acid sequence, 341 residues long: Methionine import ATP-binding protein MetN 1 (341 aa).

In terms of domain architecture, ABC transporter spans 2-241 (IEFKNVNKVF…PQTNTAKNFV (240 aa)). An ATP-binding site is contributed by 38-45 (GYSGAGKS).

Belongs to the ABC transporter superfamily. Methionine importer (TC 3.A.1.24) family. As to quaternary structure, the complex is composed of two ATP-binding proteins (MetN), two transmembrane proteins (MetI) and a solute-binding protein (MetQ).

It is found in the cell membrane. The catalysed reaction is L-methionine(out) + ATP + H2O = L-methionine(in) + ADP + phosphate + H(+). It catalyses the reaction D-methionine(out) + ATP + H2O = D-methionine(in) + ADP + phosphate + H(+). Part of the ABC transporter complex MetNIQ involved in methionine import. Responsible for energy coupling to the transport system. The sequence is that of Methionine import ATP-binding protein MetN 1 from Staphylococcus epidermidis (strain ATCC 35984 / DSM 28319 / BCRC 17069 / CCUG 31568 / BM 3577 / RP62A).